A 77-amino-acid chain; its full sequence is Large ribosomal subunit protein uL29 (77 aa).

It belongs to the universal ribosomal protein uL29 family.

The protein is Large ribosomal subunit protein uL29 (rpmC) of Mycobacterium bovis (strain ATCC BAA-935 / AF2122/97).